Reading from the N-terminus, the 85-residue chain is U4-theraphotoxin-Hhn1r (85 aa).

Positions 1–22 (MKVTLIAILTCAAVLVLHTTAA) are cleaved as a signal peptide. A propeptide spanning residues 23–48 (EELEAESQLMEVGMPDTELAAVDEER) is cleaved from the precursor. Intrachain disulfides connect Cys-52–Cys-66, Cys-56–Cys-77, and Cys-71–Cys-82.

This sequence belongs to the neurotoxin 12 (Hwtx-2) family. 02 (Hwtx-2) subfamily. As to expression, expressed by the venom gland.

The protein resides in the secreted. Its function is as follows. Postsynaptic neurotoxin. In Cyriopagopus hainanus (Chinese bird spider), this protein is U4-theraphotoxin-Hhn1r.